Consider the following 473-residue polypeptide: Glycine--tRNA ligase (473 aa).

Substrate contacts are provided by R101 and E172. ATP contacts are provided by residues 204–206 (RNE), 214–219 (FRTREF), 289–290 (EL), and 333–336 (GVER). A substrate-binding site is contributed by 219–223 (FEQME). 329–333 (EPSVG) is a substrate binding site.

It belongs to the class-II aminoacyl-tRNA synthetase family. In terms of assembly, homodimer.

The protein resides in the cytoplasm. It catalyses the reaction tRNA(Gly) + glycine + ATP = glycyl-tRNA(Gly) + AMP + diphosphate. Catalyzes the attachment of glycine to tRNA(Gly). This is Glycine--tRNA ligase from Ureaplasma parvum serovar 3 (strain ATCC 27815 / 27 / NCTC 11736).